Reading from the N-terminus, the 117-residue chain is Large-conductance mechanosensitive channel (117 aa).

3 helical membrane-spanning segments follow: residues 7–27, 30–50, and 64–84; these read EFAL…GAAF, IVTS…FGSV, and GLFI…FIFV.

Belongs to the MscL family. As to quaternary structure, homopentamer.

The protein resides in the cell membrane. Functionally, channel that opens in response to stretch forces in the membrane lipid bilayer. May participate in the regulation of osmotic pressure changes within the cell. This chain is Large-conductance mechanosensitive channel, found in Staphylococcus haemolyticus (strain JCSC1435).